The primary structure comprises 272 residues: Imidazole glycerol phosphate synthase subunit HisF (272 aa).

Catalysis depends on residues Asp-12 and Asp-131.

Belongs to the HisA/HisF family. In terms of assembly, heterodimer of HisH and HisF.

The protein resides in the cytoplasm. The catalysed reaction is 5-[(5-phospho-1-deoxy-D-ribulos-1-ylimino)methylamino]-1-(5-phospho-beta-D-ribosyl)imidazole-4-carboxamide + L-glutamine = D-erythro-1-(imidazol-4-yl)glycerol 3-phosphate + 5-amino-1-(5-phospho-beta-D-ribosyl)imidazole-4-carboxamide + L-glutamate + H(+). It participates in amino-acid biosynthesis; L-histidine biosynthesis; L-histidine from 5-phospho-alpha-D-ribose 1-diphosphate: step 5/9. Its function is as follows. IGPS catalyzes the conversion of PRFAR and glutamine to IGP, AICAR and glutamate. The HisF subunit catalyzes the cyclization activity that produces IGP and AICAR from PRFAR using the ammonia provided by the HisH subunit. The chain is Imidazole glycerol phosphate synthase subunit HisF from Methanopyrus kandleri (strain AV19 / DSM 6324 / JCM 9639 / NBRC 100938).